The primary structure comprises 150 residues: UPF0260 protein CGSHiGG_00425 (150 aa).

Belongs to the UPF0260 family.

This Haemophilus influenzae (strain PittGG) protein is UPF0260 protein CGSHiGG_00425.